A 373-amino-acid polypeptide reads, in one-letter code: Alcohol dehydrogenase 2 (373 aa).

Zn(2+)-binding residues include C47, T49, H69, C99, C102, C105, C113, and C177. T49 and H69 together coordinate an alcohol. T49 contributes to the NAD(+) binding site. Residues 202-207, D226, K231, T272, F316, and R366 contribute to the NAD(+) site; that span reads GLGAVG.

The protein belongs to the zinc-containing alcohol dehydrogenase family. In terms of assembly, homodimer. Zn(2+) serves as cofactor.

The protein resides in the cytoplasm. The enzyme catalyses a primary alcohol + NAD(+) = an aldehyde + NADH + H(+). It catalyses the reaction a secondary alcohol + NAD(+) = a ketone + NADH + H(+). This chain is Alcohol dehydrogenase 2 (ADH2), found in Hordeum vulgare (Barley).